Reading from the N-terminus, the 287-residue chain is Bifunctional protein FolD 2 (287 aa).

NADP(+) contacts are provided by residues 166–168 and I232; that span reads GAS.

Belongs to the tetrahydrofolate dehydrogenase/cyclohydrolase family. Homodimer.

It catalyses the reaction (6R)-5,10-methylene-5,6,7,8-tetrahydrofolate + NADP(+) = (6R)-5,10-methenyltetrahydrofolate + NADPH. The catalysed reaction is (6R)-5,10-methenyltetrahydrofolate + H2O = (6R)-10-formyltetrahydrofolate + H(+). It functions in the pathway one-carbon metabolism; tetrahydrofolate interconversion. Functionally, catalyzes the oxidation of 5,10-methylenetetrahydrofolate to 5,10-methenyltetrahydrofolate and then the hydrolysis of 5,10-methenyltetrahydrofolate to 10-formyltetrahydrofolate. In Hydrogenovibrio crunogenus (strain DSM 25203 / XCL-2) (Thiomicrospira crunogena), this protein is Bifunctional protein FolD 2.